A 400-amino-acid polypeptide reads, in one-letter code: Probable vacuolar protease A (400 aa).

A signal peptide spans 1 to 18 (MKGSLLLAGATLLGCTSA). Residues 19-72 (KLHSLKLKKVSLKEQLEHADIDVQIKSLGQKYMGIRPEQHEQQMFKEQTPIEVE) constitute a propeptide, activation peptide. In terms of domain architecture, Peptidase A1 spans 87-397 (YFSEISIGTP…DLGKGTVGLA (311 aa)). Aspartate 105 is a catalytic residue. Residues cysteine 118 and cysteine 123 are joined by a disulfide bond. N-linked (GlcNAc...) asparagine glycosylation occurs at asparagine 140. Aspartate 289 is a catalytic residue. Cysteines 323 and 356 form a disulfide. N-linked (GlcNAc...) asparagine glycosylation occurs at asparagine 340.

It belongs to the peptidase A1 family.

Its subcellular location is the vacuole lumen. The protein localises to the secreted. The enzyme catalyses Hydrolysis of proteins with broad specificity for peptide bonds. Cleaves -Leu-Leu-|-Val-Tyr- bond in a synthetic substrate. Does not act on esters of Tyr or Arg.. Functionally, vacuolar aspartic endopeptidase which is probably also secreted and contributes to virulence. In Arthroderma benhamiae (strain ATCC MYA-4681 / CBS 112371) (Trichophyton mentagrophytes), this protein is Probable vacuolar protease A (PEP2).